The following is a 187-amino-acid chain: Protein GrpE (187 aa).

Residues Met1–Asp26 form a disordered region.

It belongs to the GrpE family. In terms of assembly, homodimer.

It is found in the cytoplasm. Its function is as follows. Participates actively in the response to hyperosmotic and heat shock by preventing the aggregation of stress-denatured proteins, in association with DnaK and GrpE. It is the nucleotide exchange factor for DnaK and may function as a thermosensor. Unfolded proteins bind initially to DnaJ; upon interaction with the DnaJ-bound protein, DnaK hydrolyzes its bound ATP, resulting in the formation of a stable complex. GrpE releases ADP from DnaK; ATP binding to DnaK triggers the release of the substrate protein, thus completing the reaction cycle. Several rounds of ATP-dependent interactions between DnaJ, DnaK and GrpE are required for fully efficient folding. This chain is Protein GrpE, found in Methylocella silvestris (strain DSM 15510 / CIP 108128 / LMG 27833 / NCIMB 13906 / BL2).